The primary structure comprises 166 residues: uncharacterized protein (166 aa).

Alanine 2 bears the N-acetylalanine mark.

Homodimer.

This is an uncharacterized protein from Arabidopsis thaliana (Mouse-ear cress).